The following is a 218-amino-acid chain: Guanylate kinase (218 aa).

The Guanylate kinase-like domain occupies 14-193; it reads GVMLVLSSPS…AFASVRAIVS (180 aa). ATP is bound at residue 21–28; it reads SPSGAGKS.

It belongs to the guanylate kinase family.

The protein resides in the cytoplasm. It carries out the reaction GMP + ATP = GDP + ADP. Functionally, essential for recycling GMP and indirectly, cGMP. This Chelativorans sp. (strain BNC1) protein is Guanylate kinase.